A 179-amino-acid chain; its full sequence is GTP-dependent dephospho-CoA kinase (179 aa).

Positions 55, 57, 74, 76, and 128 each coordinate GTP.

It belongs to the GTP-dependent DPCK family.

It carries out the reaction 3'-dephospho-CoA + GTP = GDP + CoA + H(+). The protein operates within cofactor biosynthesis; coenzyme A biosynthesis. In terms of biological role, catalyzes the GTP-dependent phosphorylation of the 3'-hydroxyl group of dephosphocoenzyme A to form coenzyme A (CoA). The protein is GTP-dependent dephospho-CoA kinase of Saccharolobus islandicus (strain M.16.4 / Kamchatka #3) (Sulfolobus islandicus).